An 825-amino-acid polypeptide reads, in one-letter code: Probable inorganic carbon transporter subunit DabA (825 aa).

Residues C334, D336, H521, and C536 each coordinate Zn(2+).

It belongs to the inorganic carbon transporter (TC 9.A.2) DabA family. As to quaternary structure, forms a complex with DabB. Zn(2+) is required as a cofactor.

The protein resides in the cell inner membrane. Functionally, part of an energy-coupled inorganic carbon pump. This is Probable inorganic carbon transporter subunit DabA from Acidithiobacillus ferrooxidans (strain ATCC 23270 / DSM 14882 / CIP 104768 / NCIMB 8455) (Ferrobacillus ferrooxidans (strain ATCC 23270)).